Here is a 252-residue protein sequence, read N- to C-terminus: Thiazole synthase (252 aa).

Lys98 serves as the catalytic Schiff-base intermediate with DXP. 1-deoxy-D-xylulose 5-phosphate contacts are provided by residues Gly159, 185-186 (AG), and 207-208 (AT).

This sequence belongs to the ThiG family. In terms of assembly, homotetramer. Forms heterodimers with either ThiH or ThiS.

The protein localises to the cytoplasm. It carries out the reaction [ThiS sulfur-carrier protein]-C-terminal-Gly-aminoethanethioate + 2-iminoacetate + 1-deoxy-D-xylulose 5-phosphate = [ThiS sulfur-carrier protein]-C-terminal Gly-Gly + 2-[(2R,5Z)-2-carboxy-4-methylthiazol-5(2H)-ylidene]ethyl phosphate + 2 H2O + H(+). The protein operates within cofactor biosynthesis; thiamine diphosphate biosynthesis. In terms of biological role, catalyzes the rearrangement of 1-deoxy-D-xylulose 5-phosphate (DXP) to produce the thiazole phosphate moiety of thiamine. Sulfur is provided by the thiocarboxylate moiety of the carrier protein ThiS. In vitro, sulfur can be provided by H(2)S. In Mycolicibacterium smegmatis (strain ATCC 700084 / mc(2)155) (Mycobacterium smegmatis), this protein is Thiazole synthase.